Consider the following 124-residue polypeptide: Small ribosomal subunit protein uS12 (124 aa).

Asp89 bears the 3-methylthioaspartic acid mark.

Belongs to the universal ribosomal protein uS12 family. Part of the 30S ribosomal subunit. Contacts proteins S8 and S17. May interact with IF1 in the 30S initiation complex.

Functionally, with S4 and S5 plays an important role in translational accuracy. Its function is as follows. Interacts with and stabilizes bases of the 16S rRNA that are involved in tRNA selection in the A site and with the mRNA backbone. Located at the interface of the 30S and 50S subunits, it traverses the body of the 30S subunit contacting proteins on the other side and probably holding the rRNA structure together. The combined cluster of proteins S8, S12 and S17 appears to hold together the shoulder and platform of the 30S subunit. This is Small ribosomal subunit protein uS12 from Vibrio cholerae serotype O1 (strain ATCC 39315 / El Tor Inaba N16961).